A 106-amino-acid chain; its full sequence is uncharacterized protein (106 aa).

Helical transmembrane passes span 43–63 (CSTIIACNLGSWFFKISLAIV) and 86–106 (IPELALIIICTFIYFLYFSLF).

The protein resides in the membrane. This is an uncharacterized protein from Saccharomyces cerevisiae (strain ATCC 204508 / S288c) (Baker's yeast).